Reading from the N-terminus, the 443-residue chain is F-box only protein 39 (443 aa).

In terms of domain architecture, F-box spans 13 to 59 (QSCWATLPDVCLRRVFWWLGDRDRSRAALVCRKWNQIMYSADLWRYR).

Directly interacts with SKP1 and CUL1.

In terms of biological role, substrate-recognition component of the SCF (SKP1-CUL1-F-box protein)-type E3 ubiquitin ligase complex. The sequence is that of F-box only protein 39 (Fbxo39) from Rattus norvegicus (Rat).